A 1450-amino-acid chain; its full sequence is M-protein, striated muscle (1450 aa).

Positions 66 to 87 (AHEAMQESRKRTHEQKSHASDE) are disordered. 2 Ig-like C2-type domains span residues 142 to 233 (PEIL…CAVV) and 254 to 359 (PLSY…AFLF). Fibronectin type-III domains lie at 373–468 (APMD…ALDP), 501–596 (PPTN…PQDI), 602–695 (APGR…VQAA), 698–800 (CPSY…TMPE), and 803–900 (PAYD…ASPG). Ig-like C2-type domains are found at residues 899 to 995 (PGTK…LMTL), 1002 to 1115 (PTIP…FLRK), 1118 to 1204 (PHFS…LELS), 1225 to 1322 (PLKI…QRLK), and 1333 to 1422 (KVIG…VTVS).

As to expression, expressed in pectoralis and cardiac muscle.

Its function is as follows. Is a structural constituent of myofibrillar M-band in striated muscle. The chain is M-protein, striated muscle from Gallus gallus (Chicken).